An 891-amino-acid chain; its full sequence is Alanine--tRNA ligase (891 aa).

Residues His-564, His-568, Cys-677, and His-681 each coordinate Zn(2+).

Belongs to the class-II aminoacyl-tRNA synthetase family. Zn(2+) serves as cofactor.

It is found in the cytoplasm. The enzyme catalyses tRNA(Ala) + L-alanine + ATP = L-alanyl-tRNA(Ala) + AMP + diphosphate. Its function is as follows. Catalyzes the attachment of alanine to tRNA(Ala) in a two-step reaction: alanine is first activated by ATP to form Ala-AMP and then transferred to the acceptor end of tRNA(Ala). Also edits incorrectly charged Ser-tRNA(Ala) and Gly-tRNA(Ala) via its editing domain. The sequence is that of Alanine--tRNA ligase from Bradyrhizobium sp. (strain ORS 278).